The chain runs to 315 residues: Outer membrane protease OmpP (315 aa).

A signal peptide spans M1–A23. Active-site residues include D103, D105, D230, and H232.

Belongs to the peptidase A26 family.

It is found in the cell outer membrane. In terms of biological role, protease; also acts as a receptor for bacteriophage Ox2. The sequence is that of Outer membrane protease OmpP (ompP) from Escherichia coli (strain K12).